We begin with the raw amino-acid sequence, 91 residues long: Probable Fe(2+)-trafficking protein (91 aa).

This sequence belongs to the Fe(2+)-trafficking protein family.

Functionally, could be a mediator in iron transactions between iron acquisition and iron-requiring processes, such as synthesis and/or repair of Fe-S clusters in biosynthetic enzymes. This Burkholderia mallei (strain NCTC 10247) protein is Probable Fe(2+)-trafficking protein.